Reading from the N-terminus, the 90-residue chain is Potassium channel toxin BmTXK-beta (90 aa).

A signal peptide spans 1–22; it reads MMKQQFFLFLAVIVMISSVIEA. Residues 23–29 constitute a propeptide that is removed on maturation; the sequence is GRGKEIM. A BetaSPN-type CS-alpha/beta domain is found at 55 to 90; the sequence is EYACPVIEKWCEDHCAAKKAIGKCEDTECKCLKLRK. 3 cysteine pairs are disulfide-bonded: Cys58–Cys78, Cys65–Cys83, and Cys69–Cys85.

It belongs to the long chain scorpion toxin family. Class 2 subfamily. Expressed by the venom gland.

The protein localises to the secreted. Its function is as follows. This recombinant peptide reversibly and dose-dependently inhibits the transient outward potassium current (I(To)) of rabbit atrial myocyte and prolongs the action potential duration of rabbit atrial myocyte without affecting the action potential amplitude. Thus, the voltage-gated potassium channels Kv4.1/KCND1, Kv4.2/KCND2, Kv4.3/KCND3 may be the target of this toxin. This chain is Potassium channel toxin BmTXK-beta, found in Olivierus martensii (Manchurian scorpion).